The primary structure comprises 273 residues: MGQKVNSNGLRFGINKNWISRWTANSHAQTAKWLIEDEKIRNLFFVNYRNAQVSNVEIERTQATVDVFVYAAQPAFLIGSENKNIQKITKQIKQIIGRTTNLDLTINEIGSPMLSARIIARDLANAIEARVPLRTAMRQSLIKVLKAGANGIKVLVSGRLNGAEIARDKMYIEGNMPLSTLRADIDYALEKAQTTYGVIGVKVWINRGMIYTKGLNRTPAHILHPQKKQPNRQNQQPRHFNQGQVLSANKLTGSDVETSSIQALTKPNKEDKQ.

The KH type-2 domain occupies 40-110; the sequence is IRNLFFVNYR…NLDLTINEIG (71 aa). Residues 244 to 265 show a composition bias toward polar residues; the sequence is QVLSANKLTGSDVETSSIQALT. The tract at residues 244–273 is disordered; that stretch reads QVLSANKLTGSDVETSSIQALTKPNKEDKQ.

Belongs to the universal ribosomal protein uS3 family. As to quaternary structure, part of the 30S ribosomal subunit. Forms a tight complex with proteins S10 and S14.

Binds the lower part of the 30S subunit head. Binds mRNA in the 70S ribosome, positioning it for translation. The chain is Small ribosomal subunit protein uS3 from Mycoplasma pneumoniae (strain ATCC 29342 / M129 / Subtype 1) (Mycoplasmoides pneumoniae).